The primary structure comprises 249 residues: Small ribosomal subunit protein uS3 (249 aa).

One can recognise a KH type-2 domain in the interval 23 to 94; it reads LNEFFTRELS…TVELYAEKVQ (72 aa). Residues Ser-32, Ser-37, Ser-106, and Ser-141 each carry the phosphoserine modification.

The protein belongs to the universal ribosomal protein uS3 family. Component of the small ribosomal subunit (SSU). Mature yeast ribosomes consist of a small (40S) and a large (60S) subunit. The 40S small subunit contains 1 molecule of ribosomal RNA (18S rRNA) and at least 33 different proteins. The large 60S subunit contains 3 rRNA molecules (25S, 5.8S and 5S rRNA) and at least 46 different proteins.

The protein localises to the cytoplasm. Component of the ribosome, a large ribonucleoprotein complex responsible for the synthesis of proteins in the cell. The small ribosomal subunit (SSU) binds messenger RNAs (mRNAs) and translates the encoded message by selecting cognate aminoacyl-transfer RNA (tRNA) molecules. The large subunit (LSU) contains the ribosomal catalytic site termed the peptidyl transferase center (PTC), which catalyzes the formation of peptide bonds, thereby polymerizing the amino acids delivered by tRNAs into a polypeptide chain. The nascent polypeptides leave the ribosome through a tunnel in the LSU and interact with protein factors that function in enzymatic processing, targeting, and the membrane insertion of nascent chains at the exit of the ribosomal tunnel. The polypeptide is Small ribosomal subunit protein uS3 (rps3) (Schizosaccharomyces pombe (strain 972 / ATCC 24843) (Fission yeast)).